A 416-amino-acid polypeptide reads, in one-letter code: Ferrochelatase, mitochondrial (416 aa).

The transit peptide at 1–47 directs the protein to the mitochondrion; the sequence is MAAALRSAGVLLRDRLLYGGSRACQPRRCQSGAATAAAATETAQRAR. The interval 41–62 is disordered; sequence ETAQRARSPKPQAQPGNRKPRT. An N6-acetyllysine modification is found at Lys50. Protoporphyrin IX-binding residues include Arg108, Tyr116, and Ser123. The residue at position 131 (Lys131) is an N6-succinyllysine. Cys189 is a binding site for [2Fe-2S] cluster. His223 is a catalytic residue. Lys283 carries the N6-acetyllysine; alternate modification. N6-succinyllysine; alternate is present on Lys283. The active site involves Asp376. The [2Fe-2S] cluster site is built by Cys396, Cys399, and Cys404. At Lys408 the chain carries N6-acetyllysine; alternate. Lys408 carries the N6-succinyllysine; alternate modification.

Belongs to the ferrochelatase family. In terms of assembly, homodimer. Homotetramer. Interaction with PGRMC1; the interaction results in decreased FECH activity. Interacts with ABCB10 and SLC25A37; this interaction forms an oligomeric complex. Forms a complex with ABCB7 and ABCB10, where a dimeric FECH bridges ABCB7 and ABCB10 homodimers; this complex may be required for cellular iron homeostasis, mitochondrial function and heme biosynthesis. Interacts with ABCB7 and ABCB10. [2Fe-2S] cluster serves as cofactor.

The protein localises to the mitochondrion inner membrane. The enzyme catalyses heme b + 2 H(+) = protoporphyrin IX + Fe(2+). The protein operates within porphyrin-containing compound metabolism; protoheme biosynthesis; protoheme from protoporphyrin-IX: step 1/1. Catalyzes the ferrous insertion into protoporphyrin IX and participates in the terminal step in the heme biosynthetic pathway. This Bos taurus (Bovine) protein is Ferrochelatase, mitochondrial.